The primary structure comprises 298 residues: ADP/ATP translocase 3 (298 aa).

Methionine 1 is modified (N-acetylmethionine). Over 1–7 (MTEQAIS) the chain is Mitochondrial intermembrane. Threonine 2 is subject to N-acetylthreonine; in ADP/ATP translocase 3, N-terminally processed. Residues 6 to 98 (ISFAKDFLAG…FAFKDKYKQI (93 aa)) form a Solcar 1 repeat. The chain crosses the membrane as a helical span at residues 8–37 (FAKDFLAGGIAAAISKTAVAPIERVKLLLQ). The Mitochondrial matrix segment spans residues 38-74 (VQHASKQIAADKQYKGIVDCIVRIPKEQGVLSFWRGN). An N6,N6,N6-trimethyllysine modification is found at lysine 52. The chain crosses the membrane as a helical span at residues 75–99 (LANVIRYFPTQALNFAFKDKYKQIF). ADP is bound by residues arginine 80 and lysine 92. Over 100–109 (LGGVDKRTQF) the chain is Mitochondrial intermembrane. Lysine 105 is modified (N6-acetyllysine). A helical transmembrane segment spans residues 110–130 (WRYFAGNLASGGAAGATSLCF). Solcar repeat units lie at residues 111-201 (RYFA…AKGM) and 212-297 (VSWM…LKKV). Over 131–178 (VYPLDFARTRLAADVGKSGSEREFRGLGDCLVKITKSDGIRGLYQGFN) the chain is Mitochondrial matrix. A helical transmembrane segment spans residues 179–199 (VSVQGIIIYRAAYFGIYDTAK). Over 200–210 (GMLPDPKNTHI) the chain is Mitochondrial intermembrane. The helical transmembrane segment at 211–231 (VVSWMIAQTVTAVAGVVSYPF) threads the bilayer. Residues 232 to 273 (DTVRRRMMMQSGRKGADIMYKGTVDCWRKILKDEGGKAFFKG) lie on the Mitochondrial matrix side of the membrane. Residue arginine 235 coordinates ADP. The segment at 235 to 240 (RRRMMM) is important for transport activity. A Nucleotide carrier signature motif motif is present at residues 235 to 240 (RRRMMM). Lysine 268 carries the post-translational modification N6-acetyllysine. Residues 274–291 (AWSNVLRGMGGAFVLVLY) form a helical membrane-spanning segment. The Mitochondrial intermembrane portion of the chain corresponds to 292–298 (DELKKVI).

This sequence belongs to the mitochondrial carrier (TC 2.A.29) family. As to quaternary structure, monomer. Found in a complex with ARL2, ARL2BP and SLC25A6/ANT3. In terms of processing, trimethylated by ANTKMT at Lys-52.

It is found in the mitochondrion inner membrane. Its subcellular location is the membrane. It catalyses the reaction ADP(in) + ATP(out) = ADP(out) + ATP(in). The catalysed reaction is H(+)(in) = H(+)(out). Its activity is regulated as follows. The matrix-open state (m-state) is inhibited by the membrane-permeable bongkrekic acid (BKA). The cytoplasmic-open state (c-state) is inhibited by the membrane-impermeable toxic inhibitor carboxyatractyloside (CATR). Proton transporter activity is inhibited by ADP:ATP antiporter activity. In terms of biological role, ADP:ATP antiporter that mediates import of ADP into the mitochondrial matrix for ATP synthesis, and export of ATP out to fuel the cell. Cycles between the cytoplasmic-open state (c-state) and the matrix-open state (m-state): operates by the alternating access mechanism with a single substrate-binding site intermittently exposed to either the cytosolic (c-state) or matrix (m-state) side of the inner mitochondrial membrane. In addition to its ADP:ATP antiporter activity, also involved in mitochondrial uncoupling and mitochondrial permeability transition pore (mPTP) activity. Plays a role in mitochondrial uncoupling by acting as a proton transporter: proton transport uncouples the proton flows via the electron transport chain and ATP synthase to reduce the efficiency of ATP production and cause mitochondrial thermogenesis. Proton transporter activity is inhibited by ADP:ATP antiporter activity, suggesting that SLC25A6/ANT3 acts as a master regulator of mitochondrial energy output by maintaining a delicate balance between ATP production (ADP:ATP antiporter activity) and thermogenesis (proton transporter activity). Proton transporter activity requires free fatty acids as cofactor, but does not transport it. Also plays a key role in mPTP opening, a non-specific pore that enables free passage of the mitochondrial membranes to solutes of up to 1.5 kDa, and which contributes to cell death. It is however unclear if SLC25A6/ANT3 constitutes a pore-forming component of mPTP or regulates it. The chain is ADP/ATP translocase 3 from Bos taurus (Bovine).